We begin with the raw amino-acid sequence, 417 residues long: GTP-binding protein YPT11 (417 aa).

The segment at 1 to 34 is disordered; that stretch reads MSQRKRYSLNVVTSPSIPSPTPSAPIRTNESNWE. Residues 97–104, 228–232, and 292–295 each bind GTP; these read GDANVGKT, DTAGQ, and NKID. S-geranylgeranyl cysteine attachment occurs at residues Cys415 and Cys416.

It belongs to the small GTPase superfamily. Rab family. As to quaternary structure, interacts with MYO2 (via C-terminal tail domain). Interacts with YIF1, YIP3, YIP4 and YIP5.

Its subcellular location is the endoplasmic reticulum membrane. It localises to the bud tip. It is found in the bud neck. Functionally, involved in the positive control of both endoplasmic reticulum (ER) and mitochondrion inheritance during cell divison. Required for the MYO2-dependent retention of newly inherited mitochondria at the bud tip in developing daughter cells. The sequence is that of GTP-binding protein YPT11 (YPT11) from Saccharomyces cerevisiae (strain AWRI1631) (Baker's yeast).